The primary structure comprises 198 residues: uncharacterized protein (198 aa).

A run of 4 helical transmembrane segments spans residues 20 to 40 (VIVGVVLGLAGTGALIGGLWA), 70 to 90 (FFVAPCLMLGLLTVLAVTASV), 107 to 127 (LAIGLMICAATAAAVGALLVW), and 164 to 184 (VAATVLWPAGIAALVYAVLAA).

The protein to M.tuberculosis Rv1591.

It localises to the cell membrane. This is an uncharacterized protein from Mycobacterium leprae (strain TN).